A 416-amino-acid polypeptide reads, in one-letter code: Nucleoside transporter 1 (416 aa).

The span at Met-1 to Gly-26 shows a compositional bias: basic and acidic residues. The interval Met-1–Ser-28 is disordered. The Cytoplasmic segment spans residues Met-1–Gln-35. The helical transmembrane segment at Phe-36–Gly-58 threads the bilayer. Topologically, residues Leu-59–Lys-64 are extracellular. The helical transmembrane segment at Tyr-65–Val-83 threads the bilayer. Over Lys-84 to Lys-87 the chain is Cytoplasmic. A helical transmembrane segment spans residues Met-88–Ala-107. Residues His-108–Tyr-119 are Extracellular-facing. Residues Cys-120–Phe-139 form a helical membrane-spanning segment. Over Ser-140–Asn-148 the chain is Cytoplasmic. Residues Met-149–Leu-171 traverse the membrane as a helical segment. At Asp-172–Lys-187 the chain is on the extracellular side. The helical transmembrane segment at Leu-188–Leu-210 threads the bilayer. The Cytoplasmic portion of the chain corresponds to Glu-211–Lys-241. Residues Ala-242 to Gly-261 traverse the membrane as a helical segment. The Extracellular portion of the chain corresponds to His-262–Asp-273. Residues Tyr-274–Tyr-292 form a helical membrane-spanning segment. Residues Pro-293–Lys-311 are Cytoplasmic-facing. The chain crosses the membrane as a helical span at residues Leu-312 to Ala-331. At Cys-332–Gln-343 the chain is on the extracellular side. The helical transmembrane segment at Cys-344 to Val-366 threads the bilayer. The Cytoplasmic portion of the chain corresponds to Gln-367 to Thr-380. A helical transmembrane segment spans residues Ile-381–Tyr-403. The Extracellular segment spans residues Asp-404 to Pro-416.

The protein belongs to the SLC29A/ENT transporter (TC 2.A.57) family.

The protein localises to the cell membrane. The enzyme catalyses inosine(in) = inosine(out). It catalyses the reaction adenosine(in) = adenosine(out). The catalysed reaction is hypoxanthine(out) = hypoxanthine(in). It carries out the reaction guanosine(in) = guanosine(out). The enzyme catalyses guanine(out) = guanine(in). It catalyses the reaction thymidine(in) = thymidine(out). The catalysed reaction is uridine(out) = uridine(in). It carries out the reaction uracil(in) = uracil(out). The enzyme catalyses thymine(out) = thymine(in). It catalyses the reaction adenine(out) = adenine(in). The catalysed reaction is cytosine(out) = cytosine(in). It carries out the reaction xanthine(out) = xanthine(in). Functionally, nucleoside and nucleobase transporter with a broad substrate specificity. The protein is Nucleoside transporter 1 of Plasmodium vivax (strain Salvador I).